A 268-amino-acid polypeptide reads, in one-letter code: Undecaprenyl-diphosphatase (268 aa).

7 consecutive transmembrane segments (helical) span residues 47-67 (FAVLIQLGAILAILALYFSKL), 85-105 (IGVLVAFLPAAVIGAASGGLI), 109-129 (LFNPWVVCFTLILGGGILLWV), 144-164 (FPLPMYLIIGFAQCIAMFPGV), 184-204 (AAEFSFFLAIPTMLGAFVYDL), 217-237 (LIVAVGFAVSFITAIIVVKTF), and 246-266 (FALFAWWRVIVGTLGLIALAL).

The protein belongs to the UppP family.

The protein resides in the cell inner membrane. The enzyme catalyses di-trans,octa-cis-undecaprenyl diphosphate + H2O = di-trans,octa-cis-undecaprenyl phosphate + phosphate + H(+). Catalyzes the dephosphorylation of undecaprenyl diphosphate (UPP). Confers resistance to bacitracin. This chain is Undecaprenyl-diphosphatase, found in Rhodopseudomonas palustris (strain BisA53).